Reading from the N-terminus, the 111-residue chain is uncharacterized protein (111 aa).

A run of 2 helical transmembrane segments spans residues 29-49 (LLNF…ATAV) and 52-72 (ACFA…YLLA).

It localises to the membrane. This is an uncharacterized protein from Saccharomyces cerevisiae (strain ATCC 204508 / S288c) (Baker's yeast).